The sequence spans 201 residues: MTERLLVGVIVGSHGVRGLVRVKSFTQDEMALCDYGPLSDETGTRRFAVEVRNQAKGVVICQIPGVSDRTAADALKGTRLFLDRAALPADALEEDEYYHADLIGLPVDLVDGGRLGVVHSVHDFGAGDMLEVTLAQGRRSVLLPFTKAVVPLVDVKAGRLVADPPLGLLDDTRPPAGVEGEVEEDPGVGIDEDGDGKGGAS.

Residues 94–168 form the PRC barrel domain; sequence EDEYYHADLI…RLVADPPLGL (75 aa). The disordered stretch occupies residues 164-201; it reads PPLGLLDDTRPPAGVEGEVEEDPGVGIDEDGDGKGGAS. A compositionally biased stretch (acidic residues) spans 180–194; that stretch reads GEVEEDPGVGIDEDG.

This sequence belongs to the RimM family. Binds ribosomal protein uS19.

Its subcellular location is the cytoplasm. Its function is as follows. An accessory protein needed during the final step in the assembly of 30S ribosomal subunit, possibly for assembly of the head region. Essential for efficient processing of 16S rRNA. May be needed both before and after RbfA during the maturation of 16S rRNA. It has affinity for free ribosomal 30S subunits but not for 70S ribosomes. The polypeptide is Ribosome maturation factor RimM (Rhodospirillum rubrum (strain ATCC 11170 / ATH 1.1.1 / DSM 467 / LMG 4362 / NCIMB 8255 / S1)).